Reading from the N-terminus, the 91-residue chain is Small ribosomal subunit protein uS15 (91 aa).

The protein belongs to the universal ribosomal protein uS15 family. In terms of assembly, part of the 30S ribosomal subunit. Forms a bridge to the 50S subunit in the 70S ribosome, contacting the 23S rRNA.

Its function is as follows. One of the primary rRNA binding proteins, it binds directly to 16S rRNA where it helps nucleate assembly of the platform of the 30S subunit by binding and bridging several RNA helices of the 16S rRNA. Functionally, forms an intersubunit bridge (bridge B4) with the 23S rRNA of the 50S subunit in the ribosome. This is Small ribosomal subunit protein uS15 from Rickettsia africae (strain ESF-5).